We begin with the raw amino-acid sequence, 453 residues long: tRNA modification GTPase MnmE (453 aa).

Residues arginine 22, glutamate 79, and lysine 119 each coordinate (6S)-5-formyl-5,6,7,8-tetrahydrofolate. A TrmE-type G domain is found at 215–376; it reads GMKVVIAGRP…LKQHLKSLMG (162 aa). Asparagine 225 is a K(+) binding site. GTP-binding positions include 225 to 230, 244 to 250, 269 to 272, and 334 to 337; these read NAGKSS, TEIAGTT, DTAG, and NKAD. Serine 229 is a binding site for Mg(2+). K(+) is bound by residues threonine 244, isoleucine 246, and threonine 249. Residue threonine 250 coordinates Mg(2+). Lysine 453 lines the (6S)-5-formyl-5,6,7,8-tetrahydrofolate pocket.

Belongs to the TRAFAC class TrmE-Era-EngA-EngB-Septin-like GTPase superfamily. TrmE GTPase family. Homodimer. Heterotetramer of two MnmE and two MnmG subunits. K(+) serves as cofactor.

Its subcellular location is the cytoplasm. In terms of biological role, exhibits a very high intrinsic GTPase hydrolysis rate. Involved in the addition of a carboxymethylaminomethyl (cmnm) group at the wobble position (U34) of certain tRNAs, forming tRNA-cmnm(5)s(2)U34. In Shewanella denitrificans (strain OS217 / ATCC BAA-1090 / DSM 15013), this protein is tRNA modification GTPase MnmE.